Consider the following 334-residue polypeptide: Glyceraldehyde-3-phosphate dehydrogenase (334 aa).

Residues 12–13 (TI) and G111 contribute to the NAD(+) site. 140–142 (SCN) is a binding site for D-glyceraldehyde 3-phosphate. The active-site Nucleophile is the C141. R167 is a binding site for NAD(+). 192–193 (HG) lines the D-glyceraldehyde 3-phosphate pocket. Q298 contacts NAD(+).

It belongs to the glyceraldehyde-3-phosphate dehydrogenase family. Homotetramer.

It localises to the cytoplasm. The catalysed reaction is D-glyceraldehyde 3-phosphate + phosphate + NADP(+) = (2R)-3-phospho-glyceroyl phosphate + NADPH + H(+). It catalyses the reaction D-glyceraldehyde 3-phosphate + phosphate + NAD(+) = (2R)-3-phospho-glyceroyl phosphate + NADH + H(+). It functions in the pathway carbohydrate degradation; glycolysis; pyruvate from D-glyceraldehyde 3-phosphate: step 1/5. This Thermococcus sibiricus (strain DSM 12597 / MM 739) protein is Glyceraldehyde-3-phosphate dehydrogenase.